The chain runs to 316 residues: Carbamate kinase-like protein YahI (316 aa).

The protein belongs to the carbamate kinase family.

The protein is Carbamate kinase-like protein YahI (yahI) of Escherichia coli (strain K12).